Reading from the N-terminus, the 747-residue chain is Anoctamin-9 (747 aa).

Topologically, residues 1-193 are cytoplasmic; the sequence is MQDDESSQIF…LYFTWLGWYT (193 aa). The helical transmembrane segment at 194–214 threads the bilayer; the sequence is YMLVPAAVVGLIVFLSGFALF. The Extracellular segment spans residues 215–259; sequence DSSQISKEICSANDIFMCPLGDHSHRYLRLSEMCTFAKLTHLFDN. At serine 245 the chain carries Phosphoserine; by PKA. A helical transmembrane segment spans residues 260 to 280; it reads EGTVLFAIFMALWATVFLEIW. At 281–326 the chain is on the cytoplasmic side; sequence KRKRAHEVQSWKLYEWDEEEEEMALELINSPHYKLKDHRHSYLSST. The chain crosses the membrane as a helical span at residues 327-347; sequence IILILSLFMICLMIGMAHVLV. The Extracellular segment spans residues 348 to 364; sequence VYRVLAGALFSSLVKQQ. A helical membrane pass occupies residues 365 to 385; it reads VTTAVVVTGAVVHYIIIVIMT. At 386 to 414 the chain is on the cytoplasmic side; sequence KVNKYVALKLCKFEESGTFSEQERKFTVK. Residues 415–435 form a helical membrane-spanning segment; the sequence is FFILQFFAHFSSLIYIAFILG. The Extracellular portion of the chain corresponds to 436 to 543; the sequence is RINGHPGKST…EMMIQYGFTT (108 aa). Residues 544–564 form a helical membrane-spanning segment; it reads IFVAAFPLAPLLALFSNLVEI. Residues 565 to 595 are Cytoplasmic-facing; that stretch reads RLDAIKMVRLQRRLVPRKAKDIGTWLQVLET. A helical transmembrane segment spans residues 596–616; sequence IGVLAVIANGMVIAFTSEFIP. At 617–695 the chain is on the extracellular side; the sequence is RVVYKYHYGP…FWFILAIRLT (79 aa). N-linked (GlcNAc...) asparagine glycans are attached at residues asparagine 630, asparagine 643, asparagine 665, and asparagine 681. A helical transmembrane segment spans residues 696-716; sequence FVILFEHFALCIKLIAAWFVP. Residues 717-747 are Cytoplasmic-facing; the sequence is DVPQKVKNEVLQEKYDRIRHRMRFSSRSTDV.

The protein belongs to the anoctamin family. In terms of processing, phosphorylation on Ser-245 by cAMP-dependent protein kinase A (PKA)is essential for activation of its cation channel activity. In terms of tissue distribution, highly expressed in the olfactory epithelium, particularly in mature olfactory sensory neurons (at protein level). Expressed in the kidney (at protein level). Predominant expression seen in epithelial tissues. Highly expressed in the small intestine, colon and stomach.

The protein resides in the cell membrane. It localises to the endoplasmic reticulum. It catalyses the reaction a 1,2-diacyl-sn-glycero-3-phospho-L-serine(in) = a 1,2-diacyl-sn-glycero-3-phospho-L-serine(out). The enzyme catalyses a beta-D-galactosyl-(1&lt;-&gt;1')-N-acylsphing-4-enine(out) = a beta-D-galactosyl-(1&lt;-&gt;1')-N-acylsphing-4-enine(in). It carries out the reaction a 1,2-diacyl-sn-glycero-3-phosphocholine(in) = a 1,2-diacyl-sn-glycero-3-phosphocholine(out). The catalysed reaction is Ca(2+)(in) = Ca(2+)(out). It catalyses the reaction Na(+)(in) = Na(+)(out). The enzyme catalyses K(+)(in) = K(+)(out). Its activity is regulated as follows. Cation channel activity is activated via phosphorylation on Ser-245 by cAMP-dependent protein kinase A (PKA). Inhibited by NaCl. Its function is as follows. PKA-activated nonselective cation channel. Discriminates poorly among cations but is more permeable to Ca(2+) ions than to monovalent cations. Acts as a calcium-activated calcium permeable channel which may operate as a endoplasmic reticulum (ER) Ca(2+)-leak channel, reducing the loading of the ER Ca(2+) store. Regulates intracellular Ca2+ signals, ion channel activity, and cytokine release in the renal tissue. Plays an important role in olfaction, amplifying cAMP-evoked cyclic nucleotide-gated (CNG) channel currents in the olfactory sensory neurons. Has calcium-dependent phospholipid scramblase activity; scrambles phosphatidylserine, phosphatidylcholine and galactosylceramide. Does not exhibit calcium-activated chloride channel (CaCC) activity. Can inhibit the activity of ANO1. The sequence is that of Anoctamin-9 from Mus musculus (Mouse).